Consider the following 213-residue polypeptide: Orotidine 5'-phosphate decarboxylase (213 aa).

Substrate-binding positions include aspartate 9, lysine 31, 59-68 (DFKVADIPAT), serine 115, 166-176 (PGVGAQGGKIE), glycine 191, and arginine 192. Residue lysine 61 is the Proton donor of the active site.

This sequence belongs to the OMP decarboxylase family. Type 1 subfamily. In terms of assembly, homodimer.

The enzyme catalyses orotidine 5'-phosphate + H(+) = UMP + CO2. It participates in pyrimidine metabolism; UMP biosynthesis via de novo pathway; UMP from orotate: step 2/2. Catalyzes the decarboxylation of orotidine 5'-monophosphate (OMP) to uridine 5'-monophosphate (UMP). This is Orotidine 5'-phosphate decarboxylase from Methanocaldococcus jannaschii (strain ATCC 43067 / DSM 2661 / JAL-1 / JCM 10045 / NBRC 100440) (Methanococcus jannaschii).